A 177-amino-acid chain; its full sequence is Thymidine kinase (177 aa).

11–18 lines the ATP pocket; it reads GPMFSGKS. Glu83 acts as the Proton acceptor in catalysis. Residue Phe113 coordinates substrate. The Zn(2+) site is built by Cys138 and Cys141. 157–161 provides a ligand contact to substrate; the sequence is IEIIG. Residues Cys170 and Cys173 each contribute to the Zn(2+) site.

Belongs to the thymidine kinase family. In terms of assembly, homotetramer. Two molecules of substrate bind to each enzyme tetramer.

The enzyme catalyses thymidine + ATP = dTMP + ADP + H(+). Functionally, phosphorylates thymidine and thymidine analogs, such as azidothymidine (AZT). Part of the salvage pathway for pyrimidine deoxyribonucleotide synthesis. This Variola virus protein is Thymidine kinase (OPG101).